The following is a 276-amino-acid chain: N-acetylmuramoyl-L-alanine amidase AmiD (276 aa).

An N-terminal signal peptide occupies residues 1-16 (MRRFFWLVAAALLLAG). Cys-17 carries the N-palmitoyl cysteine lipid modification. Residue Cys-17 is the site of S-diacylglycerol cysteine attachment. The region spanning 42–179 (PRIKVLVIHY…APQRKDDPGP (138 aa)) is the N-acetylmuramoyl-L-alanine amidase domain. Residue His-50 participates in Zn(2+) binding. 51–52 (YT) contributes to the substrate binding site. Glu-119 acts as the Proton acceptor in catalysis. Residues His-166 and Asp-176 each coordinate Zn(2+).

The protein belongs to the N-acetylmuramoyl-L-alanine amidase 2 family. Zn(2+) is required as a cofactor.

The protein localises to the cell outer membrane. It carries out the reaction Hydrolyzes the link between N-acetylmuramoyl residues and L-amino acid residues in certain cell-wall glycopeptides.. This chain is N-acetylmuramoyl-L-alanine amidase AmiD (amiD), found in Escherichia coli (strain K12).